A 210-amino-acid chain; its full sequence is Redox-sensing transcriptional repressor Rex (210 aa).

Positions 16 to 55 (IYMRTLQELLEDDVDVISSERLAKQCGVNPAQIRKDLAYF) form a DNA-binding region, H-T-H motif. An NAD(+)-binding site is contributed by 90–95 (GLGNLG).

The protein belongs to the transcriptional regulatory Rex family. As to quaternary structure, homodimer.

The protein resides in the cytoplasm. Its function is as follows. Modulates transcription in response to changes in cellular NADH/NAD(+) redox state. The protein is Redox-sensing transcriptional repressor Rex of Syntrophobacter fumaroxidans (strain DSM 10017 / MPOB).